The primary structure comprises 1207 residues: DNA-directed RNA polymerase, mitochondrial (1207 aa).

The N-terminal 41 residues, Met-1–Ser-41, are a transit peptide targeting the mitochondrion. Disordered stretches follow at residues Met-1–Glu-48 and Lys-82–Ala-103. PPR repeat units follow at residues Thr-232 to Pro-266 and Asp-267 to Pro-302. Residues Val-702–Val-724 form a disordered region. Positions Phe-773–Ser-1207 are mediates interaction with TEFM. Catalysis depends on residues Asp-893, Lys-962, and Asp-1121.

Belongs to the phage and mitochondrial RNA polymerase family. Homodimer. Component of the mitochondrial transcription initiation complex, composed at least of TFB2M, TFAM and POLRMT. In this complex TFAM recruits POLRMT to the promoter whereas TFB2M induces structural changes in POLRMT to enable promoter opening and trapping of the DNA non-template strand. Upon metabolic stress, forms a complex composed of FOXO3, SIRT3 and mitochondrial RNA polymerase POLRMT; the complex is recruited to mtDNA in a SIRT3-dependent manner. Also forms a complex composed of FOXO3, SIRT3, TFAM and POLRMT. Interacts with TFB1M and TFB2M, leading to the stimulation of transcription. Interacts with TEFM. Interacts with MTRES1.

It localises to the mitochondrion. It catalyses the reaction RNA(n) + a ribonucleoside 5'-triphosphate = RNA(n+1) + diphosphate. DNA-dependent RNA polymerase catalyzes the transcription of mitochondrial DNA into RNA using the four ribonucleoside triphosphates as substrates. Component of the mitochondrial transcription initiation complex, composed at least of TFB2M, TFAM and POLRMT that is required for basal transcription of mitochondrial DNA. In this complex, TFAM recruits POLRMT to a specific promoter whereas TFB2M induces structural changes in POLRMT to enable promoter opening and trapping of the DNA non-template strand. Has DNA primase activity. Catalyzes the synthesis of short RNA primers that are necessary for the initiation of lagging-strand DNA synthesis from the origin of light-strand DNA replication (OriL). This chain is DNA-directed RNA polymerase, mitochondrial, found in Mus musculus (Mouse).